Reading from the N-terminus, the 318-residue chain is Molybdenum cofactor insertion chaperone PaoD (318 aa).

In terms of assembly, homodimer in solution. Interacts with MocA.

In terms of biological role, chaperone required for the production of an active PaoABC aldehyde oxidoreductase. Stabilizes the PaoC subunit and is required for the insertion of the molybdenum cofactor into this subunit. Binds molybdenum cofactor. Binds the molybdopterin cytosine dinucleotide (MCD) form of the cofactor after its formation by the molybdenum cofactor cytidylyltransferase MocA. In Escherichia coli (strain K12), this protein is Molybdenum cofactor insertion chaperone PaoD.